The chain runs to 1162 residues: DNA-directed RNA polymerase subunit beta (1162 aa).

The protein belongs to the RNA polymerase beta chain family. In terms of assembly, the RNAP catalytic core consists of 2 alpha, 1 beta, 1 beta' and 1 omega subunit. When a sigma factor is associated with the core the holoenzyme is formed, which can initiate transcription.

The catalysed reaction is RNA(n) + a ribonucleoside 5'-triphosphate = RNA(n+1) + diphosphate. In terms of biological role, DNA-dependent RNA polymerase catalyzes the transcription of DNA into RNA using the four ribonucleoside triphosphates as substrates. This Clavibacter michiganensis subsp. michiganensis (strain NCPPB 382) protein is DNA-directed RNA polymerase subunit beta.